A 471-amino-acid polypeptide reads, in one-letter code: Citrate synthase, mitochondrial (471 aa).

Residues 1 to 18 (MASLRSATALSRLRSRAG) constitute a mitochondrion transit peptide. Residues His-307, His-353, and Asp-408 contribute to the active site.

It belongs to the citrate synthase family. In terms of assembly, homodimer.

It localises to the mitochondrion matrix. It catalyses the reaction oxaloacetate + acetyl-CoA + H2O = citrate + CoA + H(+). The protein operates within carbohydrate metabolism; tricarboxylic acid cycle; isocitrate from oxaloacetate: step 1/2. This is Citrate synthase, mitochondrial (CIT) from Citrus maxima (Pomelo).